Reading from the N-terminus, the 309-residue chain is 4-hydroxy-3-methylbut-2-enyl diphosphate reductase (309 aa).

Residue Cys12 participates in [4Fe-4S] cluster binding. (2E)-4-hydroxy-3-methylbut-2-enyl diphosphate is bound by residues His43 and His77. Residues His43 and His77 each contribute to the dimethylallyl diphosphate site. Residues His43 and His77 each contribute to the isopentenyl diphosphate site. Cys99 contacts [4Fe-4S] cluster. His127 is a (2E)-4-hydroxy-3-methylbut-2-enyl diphosphate binding site. His127 provides a ligand contact to dimethylallyl diphosphate. His127 is a binding site for isopentenyl diphosphate. Glu129 (proton donor) is an active-site residue. Residue Thr167 participates in (2E)-4-hydroxy-3-methylbut-2-enyl diphosphate binding. Cys197 serves as a coordination point for [4Fe-4S] cluster. The (2E)-4-hydroxy-3-methylbut-2-enyl diphosphate site is built by Ser225, Ser226, Asn227, and Ser269. Residues Ser225, Ser226, Asn227, and Ser269 each coordinate dimethylallyl diphosphate. Isopentenyl diphosphate contacts are provided by Ser225, Ser226, Asn227, and Ser269.

The protein belongs to the IspH family. [4Fe-4S] cluster serves as cofactor.

The catalysed reaction is isopentenyl diphosphate + 2 oxidized [2Fe-2S]-[ferredoxin] + H2O = (2E)-4-hydroxy-3-methylbut-2-enyl diphosphate + 2 reduced [2Fe-2S]-[ferredoxin] + 2 H(+). It catalyses the reaction dimethylallyl diphosphate + 2 oxidized [2Fe-2S]-[ferredoxin] + H2O = (2E)-4-hydroxy-3-methylbut-2-enyl diphosphate + 2 reduced [2Fe-2S]-[ferredoxin] + 2 H(+). The protein operates within isoprenoid biosynthesis; dimethylallyl diphosphate biosynthesis; dimethylallyl diphosphate from (2E)-4-hydroxy-3-methylbutenyl diphosphate: step 1/1. It participates in isoprenoid biosynthesis; isopentenyl diphosphate biosynthesis via DXP pathway; isopentenyl diphosphate from 1-deoxy-D-xylulose 5-phosphate: step 6/6. Its function is as follows. Catalyzes the conversion of 1-hydroxy-2-methyl-2-(E)-butenyl 4-diphosphate (HMBPP) into a mixture of isopentenyl diphosphate (IPP) and dimethylallyl diphosphate (DMAPP). Acts in the terminal step of the DOXP/MEP pathway for isoprenoid precursor biosynthesis. The protein is 4-hydroxy-3-methylbut-2-enyl diphosphate reductase of Wolbachia sp. subsp. Brugia malayi (strain TRS).